A 337-amino-acid polypeptide reads, in one-letter code: 5-formaminoimidazole-4-carboxamide-1-(beta)-D-ribofuranosyl 5'-monophosphate synthetase (337 aa).

2 residues coordinate 5-amino-1-(5-phospho-beta-D-ribosyl)imidazole-4-carboxamide: His9 and Ser73. The 231-residue stretch at 94–324 (KKIFEWEADQ…IGRRIAREIR (231 aa)) folds into the ATP-grasp domain. Residues 124 to 184 (PEDV…VPMY) and Glu206 contribute to the ATP site. Asn234 provides a ligand contact to 5-amino-1-(5-phospho-beta-D-ribosyl)imidazole-4-carboxamide. Positions 273 and 286 each coordinate Mg(2+).

Belongs to the phosphohexose mutase family. Requires Mg(2+) as cofactor. Mn(2+) is required as a cofactor.

The catalysed reaction is 5-amino-1-(5-phospho-beta-D-ribosyl)imidazole-4-carboxamide + formate + ATP = 5-formamido-1-(5-phospho-D-ribosyl)imidazole-4-carboxamide + ADP + phosphate. The protein operates within purine metabolism; IMP biosynthesis via de novo pathway; 5-formamido-1-(5-phospho-D-ribosyl)imidazole-4-carboxamide from 5-amino-1-(5-phospho-D-ribosyl)imidazole-4-carboxamide (formate route): step 1/1. Its function is as follows. Catalyzes the ATP- and formate-dependent formylation of 5-aminoimidazole-4-carboxamide-1-beta-d-ribofuranosyl 5'-monophosphate (AICAR) to 5-formaminoimidazole-4-carboxamide-1-beta-d-ribofuranosyl 5'-monophosphate (FAICAR) in the absence of folates. The polypeptide is 5-formaminoimidazole-4-carboxamide-1-(beta)-D-ribofuranosyl 5'-monophosphate synthetase (Saccharolobus solfataricus (strain ATCC 35092 / DSM 1617 / JCM 11322 / P2) (Sulfolobus solfataricus)).